Consider the following 467-residue polypeptide: MAISYADNETIAAISTPMGTGGIGVIRISGKESLTILQTIFRPHNDSCSYRSHQMYYGQIVAADGHQLDEVLVVYMRAPKTYTCEDIVEIHCHGNFLVLQNVLELVIEKGASLAEPGEFTKRAFFNGRIDLTKAEAVIDVLSAKTRKGVDVAQEQLAGSLYRRIEPIRNALVHMRALFEVAIDFPDQSHDIVDYEQIDLQLKTEVIAPVKELLAGVDRGRIYRQGISMVIAGRPNVGKSSLLNAVLQEERALVTSIAGTTRDSIEEMVDILGMPVRIVDTAGIRRQAGEVEALGIQRAKDLINSADLVLFMVDGSRQLDQSDLELYEDIAHKPMIAVINKLDLLAEDGTAAAALLDFVPASVPRLAISAREGEGLEALKQAIFTVVTGSDTPWDEEGCAPNLRHKKSLEATLIAAERMVDDLAQGMGSSDLLSIDMQECLDQLGDIIGITTTDDVFDVIFSEFCLGK.

(6S)-5-formyl-5,6,7,8-tetrahydrofolate is bound by residues R27, E89, and R128. A TrmE-type G domain is found at 225–387 (GISMVIAGRP…LKQAIFTVVT (163 aa)). Residue N235 participates in K(+) binding. Residues 235 to 240 (NVGKSS), 254 to 260 (TSIAGTT), 279 to 282 (DTAG), and 368 to 370 (SAR) each bind GTP. S239 provides a ligand contact to Mg(2+). Residues T254, I256, and T259 each coordinate K(+). T260 is a binding site for Mg(2+). K467 is a binding site for (6S)-5-formyl-5,6,7,8-tetrahydrofolate.

The protein belongs to the TRAFAC class TrmE-Era-EngA-EngB-Septin-like GTPase superfamily. TrmE GTPase family. In terms of assembly, homodimer. Heterotetramer of two MnmE and two MnmG subunits. K(+) serves as cofactor.

It is found in the cytoplasm. Functionally, exhibits a very high intrinsic GTPase hydrolysis rate. Involved in the addition of a carboxymethylaminomethyl (cmnm) group at the wobble position (U34) of certain tRNAs, forming tRNA-cmnm(5)s(2)U34. The chain is tRNA modification GTPase MnmE from Desulfotalea psychrophila (strain LSv54 / DSM 12343).